Here is a 146-residue protein sequence, read N- to C-terminus: uncharacterized protein (146 aa).

This is an uncharacterized protein from Sinorhizobium fredii (strain NBRC 101917 / NGR234).